We begin with the raw amino-acid sequence, 295 residues long: Cytidine deaminase (295 aa).

2 consecutive CMP/dCMP-type deaminase domains span residues 48–168 (TDSE…FGPA) and 187–295 (KETD…YVAA). Position 89 to 91 (89 to 91 (NME)) interacts with substrate. His102 contacts Zn(2+). Glu104 acts as the Proton donor in catalysis. Residues Cys129 and Cys132 each contribute to the Zn(2+) site.

Belongs to the cytidine and deoxycytidylate deaminase family. Homodimer. It depends on Zn(2+) as a cofactor.

The catalysed reaction is cytidine + H2O + H(+) = uridine + NH4(+). The enzyme catalyses 2'-deoxycytidine + H2O + H(+) = 2'-deoxyuridine + NH4(+). This enzyme scavenges exogenous and endogenous cytidine and 2'-deoxycytidine for UMP synthesis. The protein is Cytidine deaminase of Photobacterium profundum (strain SS9).